A 295-amino-acid polypeptide reads, in one-letter code: MSWIDKIFSKSPISSSRKANVPEGVWTKCTSCEQVLYRDELKRHLEVCPKCGHHMRIDARERLLALLDKDGVTELAADLEPKDILKFRDLKKYKDRLTAAQKDTGEKDALVVLSGTLYGLPIVAAASNFGFMGGSMGSVVGAKFVAAAEEAMEKNCPFVCFSASGGARMQEALFSLMQMAKTSAVLAKMKEKGVPFISVLTDPTLGGVSASFAMLGDINIAEPKALIGFAGPRVIEQTVREKLPEGFQRAEFLLEHGAIDMIVKRSDMRDTLASLLTKLMNKPSPFNAEELSDTE.

Positions 25 to 294 (VWTKCTSCEQ…PFNAEELSDT (270 aa)) constitute a CoA carboxyltransferase N-terminal domain. Zn(2+) is bound by residues C29, C32, C48, and C51. Residues 29–51 (CTSCEQVLYRDELKRHLEVCPKC) form a C4-type zinc finger.

It belongs to the AccD/PCCB family. In terms of assembly, acetyl-CoA carboxylase is a heterohexamer composed of biotin carboxyl carrier protein (AccB), biotin carboxylase (AccC) and two subunits each of ACCase subunit alpha (AccA) and ACCase subunit beta (AccD). It depends on Zn(2+) as a cofactor.

It is found in the cytoplasm. It catalyses the reaction N(6)-carboxybiotinyl-L-lysyl-[protein] + acetyl-CoA = N(6)-biotinyl-L-lysyl-[protein] + malonyl-CoA. It functions in the pathway lipid metabolism; malonyl-CoA biosynthesis; malonyl-CoA from acetyl-CoA: step 1/1. In terms of biological role, component of the acetyl coenzyme A carboxylase (ACC) complex. Biotin carboxylase (BC) catalyzes the carboxylation of biotin on its carrier protein (BCCP) and then the CO(2) group is transferred by the transcarboxylase to acetyl-CoA to form malonyl-CoA. This chain is Acetyl-coenzyme A carboxylase carboxyl transferase subunit beta, found in Mannheimia succiniciproducens (strain KCTC 0769BP / MBEL55E).